The primary structure comprises 245 residues: 8-amino-3,8-dideoxy-manno-octulosonate cytidylyltransferase (245 aa).

This sequence belongs to the KdsB family.

Its subcellular location is the cytoplasm. The catalysed reaction is 8-amino-3,8-dideoxy-alpha-D-manno-octulosonate + CTP = CMP-8-amino-3,8-dideoxy-alpha-D-manno-oct-2-ulosonate + diphosphate. It functions in the pathway bacterial outer membrane biogenesis; lipopolysaccharide biosynthesis. In terms of biological role, activates KDO8N (a required 8-carbon sugar) for incorporation into bacterial lipopolysaccharide in the Shewanella genus. This Shewanella amazonensis (strain ATCC BAA-1098 / SB2B) protein is 8-amino-3,8-dideoxy-manno-octulosonate cytidylyltransferase.